The following is an 875-amino-acid chain: DNA mismatch repair protein MutS (875 aa).

626–633 (GPNMAGKS) contributes to the ATP binding site. Residues 830–855 (RAAPPPPAPAAPKTSPVEERLREIQP) are disordered. A compositionally biased stretch (basic and acidic residues) spans 845 to 855 (PVEERLREIQP).

Belongs to the DNA mismatch repair MutS family.

Its function is as follows. This protein is involved in the repair of mismatches in DNA. It is possible that it carries out the mismatch recognition step. This protein has a weak ATPase activity. The polypeptide is DNA mismatch repair protein MutS (Cereibacter sphaeroides (strain ATCC 17023 / DSM 158 / JCM 6121 / CCUG 31486 / LMG 2827 / NBRC 12203 / NCIMB 8253 / ATH 2.4.1.) (Rhodobacter sphaeroides)).